The primary structure comprises 775 residues: MVYAHNLGFPRIGIKREMKKTVEAYWRGEISQQQLQQQAIELQLTNWKIQAEAGVDLIPVGDFSWYDHVLDMAVRVGAIPSRFKALNSNITDTMFCMARGQAPNGIETSACEMTKWFDTNYHYIVPEFTTNQSFELHHDDLFKSTKLALENNYRAKPVILGPLSFLWLGKCKGESFNKLLLLEKLLPVYAEIFEQLSSLGVEWVQVDEPILVLDLPPEWQQAFLTTYQQLNFFNLKCLLATYFGSLDDNLSLTCQLPVDGLHIDYCRAPDQLDSVLSQLPAEKILSVGIIDGRNIWCNDLNRSLTLLENIQSSLGDRLWVAPSCSLLHVPIDLDQENKLDVELKSWFAFAKQKVAEAAFLTRGLREGRESIGAELKKNEEVIISRKTSKRIHNPNVEKKAASVTERLMRRQHEHSIRKNKQTAQLNLPLFPTTTIGSFPQTSQIRCLRRDYKQGKIDDALYEEKIRQEIAEVIGIQVKLGLDVLVHGEPERNDMVEYFGELLDGIAITSNGWVQSYGSRCVKPPIIFGDVSRERPMTLRWIEYAQSLTTKSVKGMLTGPVTILAWSFVRDDQPRSQTAKQIALALRDEVQDLERSGVRVIQIDEPAFRECLPLRKAAWQDYLEWAVKCFRLASCGVKDETQIHTHMCYSEFNDIIEAIAALDADVITIESSRSETEILKSFEKFAYPNDIGPGIYDIHSPRIPRVAEIEELAVRALQYIPIERLWINPDCGLKTRNWEETKEALSRMVDAAKHLRKAFSSEKTPTIDLELQPAST.

Residues 16 to 19 and lysine 115 contribute to the 5-methyltetrahydropteroyltri-L-glutamate site; that span reads REMK. L-homocysteine-binding positions include 435–437 and glutamate 488; that span reads IGS. L-methionine is bound by residues 435 to 437 and glutamate 488; that span reads IGS. Residues 519–520 and tryptophan 565 each bind 5-methyltetrahydropteroyltri-L-glutamate; that span reads RC. Aspartate 603 serves as a coordination point for L-homocysteine. Aspartate 603 is a binding site for L-methionine. Glutamate 609 contacts 5-methyltetrahydropteroyltri-L-glutamate. Zn(2+) is bound by residues histidine 645, cysteine 647, and glutamate 669. The active-site Proton donor is histidine 698. A Zn(2+)-binding site is contributed by cysteine 730.

This sequence belongs to the vitamin-B12 independent methionine synthase family. The cofactor is Zn(2+).

It carries out the reaction 5-methyltetrahydropteroyltri-L-glutamate + L-homocysteine = tetrahydropteroyltri-L-glutamate + L-methionine. Its pathway is amino-acid biosynthesis; L-methionine biosynthesis via de novo pathway; L-methionine from L-homocysteine (MetE route): step 1/1. Catalyzes the transfer of a methyl group from 5-methyltetrahydrofolate to homocysteine resulting in methionine formation. The polypeptide is 5-methyltetrahydropteroyltriglutamate--homocysteine methyltransferase (Coxiella burnetii (strain CbuK_Q154) (Coxiella burnetii (strain Q154))).